The sequence spans 229 residues: Ribonuclease T (229 aa).

The region spanning 23-197 (VIIDVETAGF…YDTERTAKLF (175 aa)) is the Exonuclease domain. The Mg(2+) site is built by aspartate 26, glutamate 28, histidine 184, and aspartate 189. The active-site Proton donor/acceptor is histidine 184.

This sequence belongs to the RNase T family. In terms of assembly, homodimer. Mg(2+) serves as cofactor.

In terms of biological role, trims short 3' overhangs of a variety of RNA species, leaving a one or two nucleotide 3' overhang. Responsible for the end-turnover of tRNA: specifically removes the terminal AMP residue from uncharged tRNA (tRNA-C-C-A). Also appears to be involved in tRNA biosynthesis. This chain is Ribonuclease T, found in Haemophilus influenzae (strain ATCC 51907 / DSM 11121 / KW20 / Rd).